Consider the following 188-residue polypeptide: Elongation factor P-like protein (188 aa).

The protein belongs to the elongation factor P family.

This is Elongation factor P-like protein from Stenotrophomonas maltophilia (strain R551-3).